The primary structure comprises 158 residues: Acetolactate synthase small subunit (158 aa).

Residues 4–78 (ILSVLLENES…DVLRVIKVGQ (75 aa)) enclose the ACT domain.

It belongs to the acetolactate synthase small subunit family. In terms of assembly, dimer of large and small chains.

The catalysed reaction is 2 pyruvate + H(+) = (2S)-2-acetolactate + CO2. It participates in amino-acid biosynthesis; L-isoleucine biosynthesis; L-isoleucine from 2-oxobutanoate: step 1/4. Its pathway is amino-acid biosynthesis; L-valine biosynthesis; L-valine from pyruvate: step 1/4. This Buchnera aphidicola subsp. Schizaphis graminum (strain Sg) protein is Acetolactate synthase small subunit (ilvH).